The sequence spans 282 residues: NADPH-dependent 7-cyano-7-deazaguanine reductase (282 aa).

Ile88–Ser90 contributes to the substrate binding site. Residue Ser90 to Lys91 coordinates NADPH. Cys189 acts as the Thioimide intermediate in catalysis. Asp196 functions as the Proton donor in the catalytic mechanism. His228–Glu229 contributes to the substrate binding site. Arg257–Gly258 is a binding site for NADPH.

The protein belongs to the GTP cyclohydrolase I family. QueF type 2 subfamily. In terms of assembly, homodimer.

It is found in the cytoplasm. It catalyses the reaction 7-aminomethyl-7-carbaguanine + 2 NADP(+) = 7-cyano-7-deazaguanine + 2 NADPH + 3 H(+). It functions in the pathway tRNA modification; tRNA-queuosine biosynthesis. In terms of biological role, catalyzes the NADPH-dependent reduction of 7-cyano-7-deazaguanine (preQ0) to 7-aminomethyl-7-deazaguanine (preQ1). The chain is NADPH-dependent 7-cyano-7-deazaguanine reductase from Photorhabdus laumondii subsp. laumondii (strain DSM 15139 / CIP 105565 / TT01) (Photorhabdus luminescens subsp. laumondii).